Here is a 554-residue protein sequence, read N- to C-terminus: Membrane protein insertase YidC (554 aa).

A run of 5 helical transmembrane segments spans residues 7 to 24 (VLWVIFFMSAVMLYDNWQ), 362 to 382 (VVGNWGWAIVLLTILIKAVFF), 436 to 456 (LPVVIQIPVFISLYWVLLASV), 475 to 495 (PFFILPVLMAVSMYVQTSLNP), and 510 to 530 (PIAFSVMFFFFPAGLVLYYVV).

The protein belongs to the OXA1/ALB3/YidC family. Type 1 subfamily. In terms of assembly, interacts with the Sec translocase complex via SecD. Specifically interacts with transmembrane segments of nascent integral membrane proteins during membrane integration.

Its subcellular location is the cell inner membrane. Its function is as follows. Required for the insertion and/or proper folding and/or complex formation of integral membrane proteins into the membrane. Involved in integration of membrane proteins that insert both dependently and independently of the Sec translocase complex, as well as at least some lipoproteins. Aids folding of multispanning membrane proteins. In Burkholderia vietnamiensis (strain G4 / LMG 22486) (Burkholderia cepacia (strain R1808)), this protein is Membrane protein insertase YidC.